The primary structure comprises 299 residues: Nucleoporin POM34 (299 aa).

The tract at residues 1-39 is disordered; the sequence is MKIQAGQLGLDDNDVPGPLPDTDSKPSSQSQNDTPMFKL. A compositionally biased stretch (polar residues) spans 25–34; that stretch reads KPSSQSQNDT. Helical transmembrane passes span 64–84 and 133–153; these read IMTN…IKFF and LFHL…LSTV. Ser270 carries the post-translational modification Phosphoserine. Residue Thr273 is modified to Phosphothreonine. 2 positions are modified to phosphoserine: Ser292 and Ser294.

As to quaternary structure, component of the nuclear pore complex (NPC). NPC constitutes the exclusive means of nucleocytoplasmic transport. NPCs allow the passive diffusion of ions and small molecules and the active, nuclear transport receptor-mediated bidirectional transport of macromolecules such as proteins, RNAs, ribonucleoparticles (RNPs), and ribosomal subunits across the nuclear envelope. Due to its 8-fold rotational symmetry, all subunits are present with 8 copies or multiples thereof.

It is found in the nucleus. It localises to the nuclear pore complex. The protein resides in the nucleus membrane. In terms of biological role, functions as a component of the nuclear pore complex (NPC). NPC components, collectively referred to as nucleoporins (NUPs), can play the role of both NPC structural components and of docking or interaction partners for transiently associated nuclear transport factors. The chain is Nucleoporin POM34 (POM34) from Saccharomyces cerevisiae (strain ATCC 204508 / S288c) (Baker's yeast).